Here is a 1452-residue protein sequence, read N- to C-terminus: ABC multidrug transporter A (1452 aa).

Residues 1-20 form a disordered region; that stretch reads MNESHEAGKNSSTNVEEREE. N-linked (GlcNAc...) asparagine glycans are attached at residues N2, N10, N228, N287, and N311. In terms of domain architecture, ABC transporter 1 spans 110–363; that stretch reads LKTLSLARIA…FLQMGFVCPD (254 aa). The next 6 helical transmembrane spans lie at 474 to 494, 508 to 528, 554 to 574, 583 to 603, 616 to 636, and 725 to 745; these read VTIS…SIFY, ALLF…MLTL, MIMD…VLYF, GAFF…SMFF, VLPF…FAIP, and IGVI…ATDF. The ABC transporter 2 domain occupies 802-1044; the sequence is FQWKDVCFDI…ILIDYFVRNG (243 aa). 838–845 is a binding site for ATP; the sequence is GVSGAGKT. Helical transmembrane passes span 1153–1173, 1183–1203, 1223–1243, 1271–1291, and 1297–1317; these read ALCV…PNTI, IFML…HFVA, FLIA…VLMF, LMIW…IAAF, and AGNL…VLAT. N-linked (GlcNAc...) asparagine glycans are attached at residues N1350, N1365, and N1391. A helical membrane pass occupies residues 1418–1438; it reads FGLMWVFIVFNIFAACSLYWW.

The protein belongs to the ABC transporter superfamily. ABCG family. PDR (TC 3.A.1.205) subfamily.

The protein localises to the membrane. Functionally, ABC transporter that seems not to be involved in the efflux of toxic substances, at least not the classical compounds such as itraconazole, amphotericin B, voriconazole, posaconazole, ravuconazole, or echinocandins. The sequence is that of ABC multidrug transporter A from Aspergillus fumigatus (Neosartorya fumigata).